The primary structure comprises 517 residues: Aldehyde dehydrogenase X, mitochondrial (517 aa).

The N-terminal 17 residues, 1-17 (MLRFLAPRLLSLQGRTA), are a transit peptide targeting the mitochondrion. K51 carries the post-translational modification N6-acetyllysine. Residue K52 is modified to N6-acetyllysine; alternate. An N6-succinyllysine; alternate modification is found at K52. At K81 the chain carries N6-succinyllysine. 262-267 (GSTEVG) serves as a coordination point for NAD(+). The active-site Proton acceptor is the E285. C319 functions as the Nucleophile in the catalytic mechanism. 5 positions are modified to N6-acetyllysine; alternate: K364, K383, K399, K414, and K426. 5 positions are modified to N6-succinyllysine; alternate: K364, K383, K399, K414, and K426. K429 carries the N6-acetyllysine modification.

The protein belongs to the aldehyde dehydrogenase family. As to quaternary structure, homotetramer. In terms of tissue distribution, liver, testis and to a lesser extent in brain.

It is found in the mitochondrion matrix. The catalysed reaction is an aldehyde + NAD(+) + H2O = a carboxylate + NADH + 2 H(+). Its pathway is alcohol metabolism; ethanol degradation; acetate from ethanol: step 2/2. ALDHs play a major role in the detoxification of alcohol-derived acetaldehyde. They are involved in the metabolism of corticosteroids, biogenic amines, neurotransmitters, and lipid peroxidation. This chain is Aldehyde dehydrogenase X, mitochondrial (ALDH1B1), found in Homo sapiens (Human).